Reading from the N-terminus, the 261-residue chain is Enolase-phosphatase E1 (261 aa).

D16 and E18 together coordinate Mg(2+). Substrate contacts are provided by residues 153-154 (SS) and K187. D212 lines the Mg(2+) pocket.

This sequence belongs to the HAD-like hydrolase superfamily. MasA/MtnC family. As to quaternary structure, monomer. It depends on Mg(2+) as a cofactor.

It is found in the cytoplasm. The protein resides in the nucleus. The enzyme catalyses 5-methylsulfanyl-2,3-dioxopentyl phosphate + H2O = 1,2-dihydroxy-5-(methylsulfanyl)pent-1-en-3-one + phosphate. Its pathway is amino-acid biosynthesis; L-methionine biosynthesis via salvage pathway; L-methionine from S-methyl-5-thio-alpha-D-ribose 1-phosphate: step 3/6. It participates in amino-acid biosynthesis; L-methionine biosynthesis via salvage pathway; L-methionine from S-methyl-5-thio-alpha-D-ribose 1-phosphate: step 4/6. Its function is as follows. Bifunctional enzyme that catalyzes the enolization of 2,3-diketo-5-methylthiopentyl-1-phosphate (DK-MTP-1-P) into the intermediate 2-hydroxy-3-keto-5-methylthiopentenyl-1-phosphate (HK-MTPenyl-1-P), which is then dephosphorylated to form the acireductone 1,2-dihydroxy-3-keto-5-methylthiopentene (DHK-MTPene). The polypeptide is Enolase-phosphatase E1 (enoph1) (Danio rerio (Zebrafish)).